A 127-amino-acid chain; its full sequence is Small ribosomal subunit protein uS13 (127 aa).

The interval 97–127 (PVRGQRTKTNARTRKGPRKTVAGKKGVKDLR) is disordered. A compositionally biased stretch (basic residues) spans 101–118 (QRTKTNARTRKGPRKTVA).

The protein belongs to the universal ribosomal protein uS13 family. In terms of assembly, part of the 30S ribosomal subunit. Forms a loose heterodimer with protein S19. Forms two bridges to the 50S subunit in the 70S ribosome.

In terms of biological role, located at the top of the head of the 30S subunit, it contacts several helices of the 16S rRNA. In the 70S ribosome it contacts the 23S rRNA (bridge B1a) and protein L5 of the 50S subunit (bridge B1b), connecting the 2 subunits; these bridges are implicated in subunit movement. Contacts the tRNAs in the A and P-sites. In Rhodopirellula baltica (strain DSM 10527 / NCIMB 13988 / SH1), this protein is Small ribosomal subunit protein uS13.